Consider the following 352-residue polypeptide: DNA polymerase IV (352 aa).

The region spanning 4 to 185 (IIHVDMDCFF…LPLSKIPGVG (182 aa)) is the UmuC domain. Aspartate 8 and aspartate 103 together coordinate Mg(2+). The active site involves glutamate 104.

The protein belongs to the DNA polymerase type-Y family. Monomer. Mg(2+) serves as cofactor.

The protein localises to the cytoplasm. It carries out the reaction DNA(n) + a 2'-deoxyribonucleoside 5'-triphosphate = DNA(n+1) + diphosphate. In terms of biological role, poorly processive, error-prone DNA polymerase involved in untargeted mutagenesis. Copies undamaged DNA at stalled replication forks, which arise in vivo from mismatched or misaligned primer ends. These misaligned primers can be extended by PolIV. Exhibits no 3'-5' exonuclease (proofreading) activity. May be involved in translesional synthesis, in conjunction with the beta clamp from PolIII. The polypeptide is DNA polymerase IV (Enterobacter sp. (strain 638)).